The primary structure comprises 618 residues: Two-component response regulator-like APRR1 (618 aa).

Residues 20-138 enclose the Response regulatory domain; that stretch reads RILLCDNDST…ELLNLWTHMW (119 aa). Polar residues-rich tracts occupy residues 161 to 174, 187 to 200, 246 to 257, 324 to 334, and 375 to 389; these read SDQS…TNLF, NPQR…ENEW, RNSNPAQFSSAP, PKSTVLRTNGQ, and TEQY…QNGA. Disordered regions lie at residues 161–200, 239–260, 316–338, 368–395, and 573–618; these read SDQS…ENEW, SHHE…PKKS, TKQA…DPPL, QAHR…PHSL, and VRKM…ALGT. In terms of domain architecture, CCT spans 533–575; that stretch reads REEALLKFRRKRNQRCFDKKIRYVNRKRLAERRPRVKGQFVRK. Residues 588–610 adopt a coiled-coil conformation; the sequence is DSADYDDEEEEEEEEEEENRDSS. The span at 590 to 606 shows a compositional bias: acidic residues; that stretch reads ADYDDEEEEEEEEEEEN.

It belongs to the ARR-like family. As to quaternary structure, interacts with PIF1, PIL2, PIF3, PIF4, PIL5, PIL6, ABI3 (via C-terminus), ADO1/ZTL, ADO2, APRR3 and TCP21/CHE. Both the phosphorylated and the dephosphorylated forms interact with ADO1/ZLT. In terms of processing, phosphorylated; during the day. Phosphorylation is required for optimal interaction with APRR3. Expressed in leaves, flowers and siliques. Restricted to the vasculature.

It localises to the nucleus. Functionally, controls photoperiodic flowering response. Component of the circadian clock. Expression of several members of the ARR-like family is controlled by circadian rhythm. The particular coordinated sequential expression of APRR9, APRR7, APRR5, APRR3 and APPR1 result to circadian waves that may be at the basis of the endogenous circadian clock. Positive regulator of CCA1 and LHY expression. This chain is Two-component response regulator-like APRR1 (APRR1), found in Arabidopsis thaliana (Mouse-ear cress).